The sequence spans 114 residues: Dolichyl-diphosphooligosaccharide--protein glycosyltransferase subunit DAD1 (114 aa).

At 1–30 (MPKAAGDAKLLIQSLNKAYAATPTNLKIID) the chain is on the cytoplasmic side. The chain crosses the membrane as a helical span at residues 31–51 (LYVVFAVVTALLQVVYMGIVG). A topological domain (lumenal) is located at residue Ser52. A helical membrane pass occupies residues 53–73 (FPFNSFLSGVLSCIGTAVLAV). Over 74-93 (CHRIQVNKDNKEFKDLAPER) the chain is Cytoplasmic. The chain crosses the membrane as a helical span at residues 94–114 (AFADFVLCSLVLHLVIMNFLG).

The protein belongs to the DAD/OST2 family. As to quaternary structure, component of the oligosaccharyltransferase (OST) complex.

It localises to the endoplasmic reticulum membrane. The protein operates within protein modification; protein glycosylation. Its function is as follows. Subunit of the oligosaccharyl transferase (OST) complex that catalyzes the initial transfer of a defined glycan (Glc(3)Man(9)GlcNAc(2) in eukaryotes) from the lipid carrier dolichol-pyrophosphate to an asparagine residue within an Asn-X-Ser/Thr consensus motif in nascent polypeptide chains, the first step in protein N-glycosylation. N-glycosylation occurs cotranslationally and the complex associates with the Sec61 complex at the channel-forming translocon complex that mediates protein translocation across the endoplasmic reticulum (ER). All subunits are required for a maximal enzyme activity. In Hordeum vulgare (Barley), this protein is Dolichyl-diphosphooligosaccharide--protein glycosyltransferase subunit DAD1 (DAD1).